A 59-amino-acid chain; its full sequence is Potassium channel toxin alpha-KTx 15.2 (59 aa).

The signal sequence occupies residues methionine 1–cysteine 22. Glutamine 23 bears the Pyrrolidone carboxylic acid mark. 3 disulfides stabilise this stretch: cysteine 30-cysteine 50, cysteine 35-cysteine 55, and cysteine 39-cysteine 57.

It belongs to the short scorpion toxin superfamily. Potassium channel inhibitor family. Alpha-KTx 15 subfamily. As to expression, expressed by the venom gland.

Its subcellular location is the secreted. Functionally, blocks both human ERG1/Kv11.1/KCNH2 potassium channels (in a reversible manner) and A-type voltage-gated potassium channels Kv4/KCND (in an irreversible manner). The presence of the Kv4-associated proteins DPP6 or DPP10 is mandatory to have high-affinity blockade of Kv4.2/KCND2 and Kv4.3/KCND3 channels. In contrast, the presence of the Kv4-associated protein KChIP1/KCNIP1 does not enhance the affinity blockade. May dispose of two functional faces (A and B); the two basic residues (Arg-40 and Lys-41) on the alpha-helix side of the peptide that blocks the hERG current (face A) and the typical dyad through which it blocks A-type currents on the beta-sheet side (face B). In adult rat brain, it binds to sites in the striatum, hippocampus, superior colliculus, and cerebellum. It shares the same target in rat brain than AaTX1 (AC Q867F4) and AmmTX3 (AC P60208). In DPP6 knockout mice, A-type currents are much less affected by the toxin than in wild-type mice. The chain is Potassium channel toxin alpha-KTx 15.2 from Olivierus martensii (Manchurian scorpion).